The following is a 103-amino-acid chain: Large ribosomal subunit protein uL24 (103 aa).

Belongs to the universal ribosomal protein uL24 family. As to quaternary structure, part of the 50S ribosomal subunit.

In terms of biological role, one of two assembly initiator proteins, it binds directly to the 5'-end of the 23S rRNA, where it nucleates assembly of the 50S subunit. Its function is as follows. One of the proteins that surrounds the polypeptide exit tunnel on the outside of the subunit. The sequence is that of Large ribosomal subunit protein uL24 from Endomicrobium trichonymphae.